Reading from the N-terminus, the 239-residue chain is tRNA (guanine-N(1)-)-methyltransferase (239 aa).

Residues Gly108 and 127 to 132 (IGDYVL) contribute to the S-adenosyl-L-methionine site.

The protein belongs to the RNA methyltransferase TrmD family. As to quaternary structure, homodimer.

It is found in the cytoplasm. The catalysed reaction is guanosine(37) in tRNA + S-adenosyl-L-methionine = N(1)-methylguanosine(37) in tRNA + S-adenosyl-L-homocysteine + H(+). Functionally, specifically methylates guanosine-37 in various tRNAs. In Lactobacillus helveticus (strain DPC 4571), this protein is tRNA (guanine-N(1)-)-methyltransferase.